A 195-amino-acid chain; its full sequence is Peptidyl-tRNA hydrolase (195 aa).

Tyr-17 serves as a coordination point for tRNA. The Proton acceptor role is filled by His-22. Phe-68, Asn-70, and Asn-116 together coordinate tRNA.

Belongs to the PTH family. In terms of assembly, monomer.

It localises to the cytoplasm. The enzyme catalyses an N-acyl-L-alpha-aminoacyl-tRNA + H2O = an N-acyl-L-amino acid + a tRNA + H(+). Its function is as follows. Hydrolyzes ribosome-free peptidyl-tRNAs (with 1 or more amino acids incorporated), which drop off the ribosome during protein synthesis, or as a result of ribosome stalling. Functionally, catalyzes the release of premature peptidyl moieties from peptidyl-tRNA molecules trapped in stalled 50S ribosomal subunits, and thus maintains levels of free tRNAs and 50S ribosomes. The chain is Peptidyl-tRNA hydrolase from Shewanella amazonensis (strain ATCC BAA-1098 / SB2B).